The following is a 74-amino-acid chain: MTDDNIRQIAFYGKGGIGKSTTSQNTLAAMAEMGQRILIVGCDPKADSTRLMLHSKAQTTVLHLAAERGAVEDI.

Position 13–20 (Gly13–Ser20) interacts with ATP.

This sequence belongs to the NifH/BchL/ChlL family. Homodimer. [4Fe-4S] cluster serves as cofactor.

It carries out the reaction N2 + 8 reduced [2Fe-2S]-[ferredoxin] + 16 ATP + 16 H2O = H2 + 8 oxidized [2Fe-2S]-[ferredoxin] + 2 NH4(+) + 16 ADP + 16 phosphate + 6 H(+). Functionally, the key enzymatic reactions in nitrogen fixation are catalyzed by the nitrogenase complex, which has 2 components: the iron protein and the molybdenum-iron protein. This Nostoc sp. (strain MUN 8820) protein is Nitrogenase iron protein (nifH).